Consider the following 378-residue polypeptide: Succinyl-diaminopimelate desuccinylase 2 (378 aa).

H68 contributes to the Zn(2+) binding site. Residue D70 is part of the active site. D101 provides a ligand contact to Zn(2+). Catalysis depends on E135, which acts as the Proton acceptor. Zn(2+) is bound by residues E136, E164, and H350.

This sequence belongs to the peptidase M20A family. DapE subfamily. In terms of assembly, homodimer. The cofactor is Zn(2+). It depends on Co(2+) as a cofactor.

It catalyses the reaction N-succinyl-(2S,6S)-2,6-diaminopimelate + H2O = (2S,6S)-2,6-diaminopimelate + succinate. The protein operates within amino-acid biosynthesis; L-lysine biosynthesis via DAP pathway; LL-2,6-diaminopimelate from (S)-tetrahydrodipicolinate (succinylase route): step 3/3. In terms of biological role, catalyzes the hydrolysis of N-succinyl-L,L-diaminopimelic acid (SDAP), forming succinate and LL-2,6-diaminopimelate (DAP), an intermediate involved in the bacterial biosynthesis of lysine and meso-diaminopimelic acid, an essential component of bacterial cell walls. The protein is Succinyl-diaminopimelate desuccinylase 2 of Alteromonas mediterranea (strain DSM 17117 / CIP 110805 / LMG 28347 / Deep ecotype).